Here is a 285-residue protein sequence, read N- to C-terminus: Isoprenyl transferase 2 (285 aa).

Residues 11-30 (RREYRAPEPHPSGARAPKLP) are disordered. Aspartate 43 is a catalytic residue. Position 43 (aspartate 43) interacts with Mg(2+). Residues 44–47 (GNGR), tryptophan 48, arginine 56, histidine 60, and 88–90 (STE) each bind substrate. The active-site Proton acceptor is asparagine 91. Substrate-binding positions include tryptophan 92, arginine 94, arginine 211, and 217-219 (RTS). Glutamate 230 provides a ligand contact to Mg(2+).

The protein belongs to the UPP synthase family. Homodimer. Requires Mg(2+) as cofactor.

In terms of biological role, catalyzes the condensation of isopentenyl diphosphate (IPP) with allylic pyrophosphates generating different type of terpenoids. The protein is Isoprenyl transferase 2 of Streptomyces avermitilis (strain ATCC 31267 / DSM 46492 / JCM 5070 / NBRC 14893 / NCIMB 12804 / NRRL 8165 / MA-4680).